The following is a 124-amino-acid chain: Fluoride-specific ion channel FluC 1 (124 aa).

The next 4 membrane-spanning stretches (helical) occupy residues 7-27, 35-55, 63-83, and 101-121; these read ALTLAAAGAGSVLRYLLGGWV, FPWGTLAVNALGCLGLGLLQG, LLLVLGSGLLAGFTTFSTLML, and IVGTLALGLFALSAGARAGAW.

It belongs to the fluoride channel Fluc/FEX (TC 1.A.43) family.

It is found in the cell membrane. It carries out the reaction fluoride(in) = fluoride(out). Functionally, fluoride-specific ion channel. Important for reducing fluoride concentration in the cell, thus reducing its toxicity. In Rubrobacter xylanophilus (strain DSM 9941 / JCM 11954 / NBRC 16129 / PRD-1), this protein is Fluoride-specific ion channel FluC 1.